The following is a 46-amino-acid chain: Antimicrobial peptide eNAP-2 (46 aa).

The 35-residue stretch at 12–46 (RPGRCPTVPPGTFGHCACLCTGDASEPKGQKCCSN) folds into the WAP domain.

Has antibiotic activity against several equine uterine pathogens; S.zooepidemicus, E.coli and P.aeruginosa. Highly efficient against S.zoopedemicus. Not active against K.pneumoniae. Selectively inactivates microbial serine proteases (subtilisin A and proteinase K) without inhibiting mammalian serine proteases (human neutrophil elastase, human cathepsin G and bovine pancreatic trypsin). The protein is Antimicrobial peptide eNAP-2 of Equus caballus (Horse).